Here is a 474-residue protein sequence, read N- to C-terminus: 3-isopropylmalate dehydratase large subunit (474 aa).

3 residues coordinate [4Fe-4S] cluster: C350, C411, and C414.

The protein belongs to the aconitase/IPM isomerase family. LeuC type 1 subfamily. As to quaternary structure, heterodimer of LeuC and LeuD. The cofactor is [4Fe-4S] cluster.

It catalyses the reaction (2R,3S)-3-isopropylmalate = (2S)-2-isopropylmalate. Its pathway is amino-acid biosynthesis; L-leucine biosynthesis; L-leucine from 3-methyl-2-oxobutanoate: step 2/4. Its function is as follows. Catalyzes the isomerization between 2-isopropylmalate and 3-isopropylmalate, via the formation of 2-isopropylmaleate. This is 3-isopropylmalate dehydratase large subunit from Hydrogenovibrio crunogenus (strain DSM 25203 / XCL-2) (Thiomicrospira crunogena).